The chain runs to 203 residues: uncharacterized protein (203 aa).

This is an uncharacterized protein from Aquifex aeolicus (strain VF5).